A 92-amino-acid polypeptide reads, in one-letter code: MARSTKKGPFIDGHLMKKVLAAKEAGDKKPIKTWSRRSVIFPEFIGLTINVHNGRQFIPVFITENHVGYKLGEFAPTRTFKGHKGSVQKKVG.

Belongs to the universal ribosomal protein uS19 family.

Functionally, protein S19 forms a complex with S13 that binds strongly to the 16S ribosomal RNA. The polypeptide is Small ribosomal subunit protein uS19 (Sulfurovum sp. (strain NBC37-1)).